A 690-amino-acid chain; its full sequence is Eukaryotic translation initiation factor 3 subunit B (690 aa).

Residues 1–11 are compositionally biased toward basic and acidic residues; sequence MAKKKSEDHSG. The disordered stretch occupies residues 1 to 33; it reads MAKKKSEDHSGADANDSDYNEEPNFDDPPNFVD. Residues 15–25 show a composition bias toward acidic residues; the sequence is NDSDYNEEPNF. One can recognise an RRM domain in the interval 57 to 141; sequence SVVVVDNMPK…YTFAVNLFTD (85 aa). 5 WD repeats span residues 207–246, 292–331, 334–369, 442–484, and 530–575; these read TRER…KIQK, GDGM…LLDL, IKIP…TLMK, EIRE…KPSL, and PDHF…IKRT. The stretch at 613–646 forms a coiled coil; it reads EQKDRLRLTRASKELLEKRAQLRETFMEYRNKRI.

Belongs to the eIF-3 subunit B family. Component of the eukaryotic translation initiation factor 3 (eIF-3) complex. The eIF-3 complex interacts with pix. Interacts with mxt.

The protein localises to the cytoplasm. RNA-binding component of the eukaryotic translation initiation factor 3 (eIF-3) complex, which is involved in protein synthesis of a specialized repertoire of mRNAs and, together with other initiation factors, stimulates binding of mRNA and methionyl-tRNAi to the 40S ribosome. The eIF-3 complex specifically targets and initiates translation of a subset of mRNAs involved in cell proliferation. In Drosophila grimshawi (Hawaiian fruit fly), this protein is Eukaryotic translation initiation factor 3 subunit B.